A 228-amino-acid polypeptide reads, in one-letter code: Cytochrome b5 domain-containing protein 1 (228 aa).

Residues 17–83 (RRYFTPSEVA…DPQTRDIRKH (67 aa)) enclose the Cytochrome b5 heme-binding domain. Histidine 83 is a heme binding site.

This sequence belongs to the cytochrome b5 family.

Its subcellular location is the cytoplasm. It localises to the cytoskeleton. The protein resides in the cilium axoneme. In terms of biological role, radial spoke stalk protein that binds heme under oxidizing conditions. Required for the coordinated beating of multiple cilia maybe by functioning in a redox signaling pathway. This Mus musculus (Mouse) protein is Cytochrome b5 domain-containing protein 1 (Cyb5d1).